The sequence spans 257 residues: Envelope glycoprotein (257 aa).

The Extracellular segment spans residues 1–229 (FPILPGVWVD…EWAIHLLKGL (229 aa)). N-linked (GlcNAc...) asparagine; by host glycans are attached at residues asparagine 15, asparagine 58, and asparagine 68. The tract at residues 95-115 (GPTARIFASILAPGVAAAQAL) is fusion peptide. The stretch at 112–162 (AQALREIERLACWSVKQANLTTSLLGDLLDDVTSIRHAVLQNRAAIDFLLL) forms a coiled coil. Residue asparagine 130 is glycosylated (N-linked (GlcNAc...) asparagine; by host). An immunosuppression region spans residues 151 to 167 (LQNRAAIDFLLLAHGHG). Residue asparagine 178 is glycosylated (N-linked (GlcNAc...) asparagine; by host). Residues 180 to 210 (SDHSEAIQKKFQLMKEHVNKIGVDSDPIGSW) are a coiled coil. A helical membrane pass occupies residues 230–250 (LLGLVVILLLVVCLPCLLQFV). Residue cysteine 245 is the site of S-palmitoyl cysteine; by host attachment. At 251–257 (SSSTRKM) the chain is on the cytoplasmic side.

As to quaternary structure, the mature envelope protein (Env) consists of a trimer of SU-TM heterodimers attached by noncovalent interactions or by a labile interchain disulfide bond. Post-translationally, specific enzymatic cleavages in vivo yield mature proteins. Envelope glycoproteins are synthesized as an inactive precursor that is N-glycosylated and processed likely by host cell furin or by a furin-like protease in the Golgi to yield the mature SU and TM proteins. The cleavage site between SU and TM requires the minimal sequence [KR]-X-[KR]-R. The transmembrane protein is palmitoylated.

Its subcellular location is the virion membrane. It is found in the host cell membrane. In terms of biological role, the surface protein (SU) attaches the virus to the host cell by binding to its receptor. This interaction triggers the refolding of the transmembrane protein (TM) and is thought to activate its fusogenic potential by unmasking its fusion peptide. Fusion occurs at the host cell plasma membrane. The transmembrane protein (TM) acts as a class I viral fusion protein. Under the current model, the protein has at least 3 conformational states: pre-fusion native state, pre-hairpin intermediate state, and post-fusion hairpin state. During viral and target cell membrane fusion, the coiled coil regions (heptad repeats) assume a trimer-of-hairpins structure, positioning the fusion peptide in close proximity to the C-terminal region of the ectodomain. The formation of this structure appears to drive apposition and subsequent fusion of viral and target cell membranes. Membranes fusion leads to delivery of the nucleocapsid into the cytoplasm. The polypeptide is Envelope glycoprotein (env) (Galliformes).